The following is a 251-amino-acid chain: Phosphate import ATP-binding protein PstB (251 aa).

An ABC transporter domain is found at 5-246 (IEIENFSAYY…PKNRLTEEYL (242 aa)). An ATP-binding site is contributed by 37 to 44 (GPSGCGKT).

Belongs to the ABC transporter superfamily. Phosphate importer (TC 3.A.1.7) family. The complex is composed of two ATP-binding proteins (PstB), two transmembrane proteins (PstC and PstA) and a solute-binding protein (PstS).

Its subcellular location is the cell inner membrane. The catalysed reaction is phosphate(out) + ATP + H2O = ADP + 2 phosphate(in) + H(+). Part of the ABC transporter complex PstSACB involved in phosphate import. Responsible for energy coupling to the transport system. This chain is Phosphate import ATP-binding protein PstB, found in Thermotoga maritima (strain ATCC 43589 / DSM 3109 / JCM 10099 / NBRC 100826 / MSB8).